Consider the following 193-residue polypeptide: CDP-diacylglycerol--glycerol-3-phosphate 3-phosphatidyltransferase (193 aa).

The next 4 helical transmembrane spans lie at 8-28 (ITLARIALIPIFMIIMLAPFD), 39-59 (IPVAHLAGAILFIIASTTDWV), 88-108 (AALIILVQFDLAPAWMVIVII), and 157-177 (LVSFPFADLALWVAVFFTVVS).

It belongs to the CDP-alcohol phosphatidyltransferase class-I family.

It localises to the cell membrane. It carries out the reaction a CDP-1,2-diacyl-sn-glycerol + sn-glycerol 3-phosphate = a 1,2-diacyl-sn-glycero-3-phospho-(1'-sn-glycero-3'-phosphate) + CMP + H(+). It functions in the pathway phospholipid metabolism; phosphatidylglycerol biosynthesis; phosphatidylglycerol from CDP-diacylglycerol: step 1/2. This protein catalyzes the committed step to the synthesis of the acidic phospholipids. The sequence is that of CDP-diacylglycerol--glycerol-3-phosphate 3-phosphatidyltransferase (pgsA) from Bacillus subtilis (strain 168).